A 301-amino-acid polypeptide reads, in one-letter code: Probable alpha-L-glutamate ligase (301 aa).

The ATP-grasp domain occupies 104–287 (LQLLSRKGIG…VADMIFEFIE (184 aa)). Residues lysine 141, 178–179 (EF), aspartate 187, and 211–213 (RSN) contribute to the ATP site. 3 residues coordinate Mg(2+): aspartate 248, glutamate 260, and asparagine 262. Mn(2+) is bound by residues aspartate 248, glutamate 260, and asparagine 262.

The protein belongs to the RimK family. Mg(2+) is required as a cofactor. Requires Mn(2+) as cofactor.

In Vibrio atlanticus (strain LGP32) (Vibrio splendidus (strain Mel32)), this protein is Probable alpha-L-glutamate ligase.